The sequence spans 971 residues: MTVKNETIDYSKTLYLPQTNFPMRGRLPQKELELIARWDNMGLYAQLRQQAKDRPLYILHDGPPYANGHIHIGHALNKVLKDVIIRSFQMRGFNANYVPGWDCHGLPIEWKIEEKYRAQGKNKDDVPLNEFRQECREFAKYWITVQSEEFKRLGVVGDFNSPYTTMAFHAEARIASELMKFAMSGQIYRGSKPVMWSVVERTALAEAEIEYHDYESEVIWVKFPVLQADSSDLCGAYVVIWTTTPWTIPGNRAVSYSSQISYGVYEVASTQNDFGPQVGERLLFADALAMSCAEKAKLVLKRLRIISADELKTLFLFHPLKGFAGSYNDKIAMLDGAHVTENAGTGFVHTAPSHGREDFEIWNAYKPLLEQFGIDSSIPFPVDDAGFYTKDAPGFGPNREGGAVRVIDDNGKMGDANKEVINALIKADRLFARGRLKHSYPHSWRSKKPVIFRNTPQWFISMDKDLGDGSTLRSRALEAVSMTRFVPSSGQSRLASMIADRPDWVLSRQRAWGVPICIFANEDGVILKDERVNERILRAFEAEGADAWFAEGARERFLGERAHESWVQVLDILDVWFDSGASHSFVLEDRDDLKWPADVYFEGSDQHRGWFQSSLLESCGTRACSPYKAVITHGFTLDENGKKMSKSLGNTVVPQEIIKTSGADIFRLWVMTTDYWEDQRLGKQILQTNMDLYRKLRNAIRWMLGILAHDEGEKISYCALPDLEKFILHQLFELDQLINRAYDEFDFKKIMRALLDFSITELSAFYFDIRKDSLYCDAPSSKKRKASLQVIREIFERMVIWLAPMLPFTMEEAWLEHSPKSHSVHLEQFRSVPGEWQNGFLAERWRKVRQVRKVVTGALEFERAAKRIGSSLEAAPIVFISNPVLLEALENLDMAEICITSALTITQDVPPSDAFILSDVEGVGVYPGKALGTKCARSWRYTQDVGSDPAYPDVSARDAAALRELQMLGKI.

Positions 64–74 match the 'HIGH' region motif; sequence PYANGHIHIGH. Glu602 contacts L-isoleucyl-5'-AMP. The 'KMSKS' region signature appears at 643 to 647; that stretch reads KMSKS. Lys646 is an ATP binding site.

This sequence belongs to the class-I aminoacyl-tRNA synthetase family. IleS type 1 subfamily. In terms of assembly, monomer.

It localises to the cytoplasm. It catalyses the reaction tRNA(Ile) + L-isoleucine + ATP = L-isoleucyl-tRNA(Ile) + AMP + diphosphate. Functionally, catalyzes the attachment of isoleucine to tRNA(Ile). As IleRS can inadvertently accommodate and process structurally similar amino acids such as valine, to avoid such errors it has two additional distinct tRNA(Ile)-dependent editing activities. One activity is designated as 'pretransfer' editing and involves the hydrolysis of activated Val-AMP. The other activity is designated 'posttransfer' editing and involves deacylation of mischarged Val-tRNA(Ile). This Bartonella quintana (strain Toulouse) (Rochalimaea quintana) protein is Isoleucine--tRNA ligase.